A 467-amino-acid chain; its full sequence is uncharacterized protein (467 aa).

9 Sel1-like repeats span residues 38–73 (PAAAFELAKHLMDADSPYQDREQGMEMLRIAAEQGH), 107–138 (PEAQVRLMYLLYASRHFEEALEWAKTSAKNNN), 139–172 (PHGQYLLAQYCRYGTPPDFETAHLLYRKSAAQGL), 173–208 (PEAHWQLGLQYRFGQGTKVDTAQAVNHLRAAAQQGY), 240–275 (PDAHAALADIYLQGKHLERNHKLALHHAEAAAAERH), 276–311 (PEGLRILGDICRYGLGIAPDTEKARHYYRQAAEAGS), 343–378 (AERLYQKAQALHYGLQCAPEYAAALKLYTEAAELGH), 379–414 (SKAQTNLGSMYYFGQGMTADYNEARKWFEKAAAKKD), and 415–450 (SMAFYNLACIHYSGHGVEPDKEKACRYLQEAINNGY).

This is an uncharacterized protein from Neisseria meningitidis serogroup B (strain ATCC BAA-335 / MC58).